The following is a 105-amino-acid chain: 3-phenylpropionate/cinnamic acid dioxygenase ferredoxin subunit (105 aa).

Positions 4-99 constitute a Rieske domain; that stretch reads LFVCTVEELP…VVVKDGNIYI (96 aa). Residues cysteine 42, histidine 44, cysteine 62, and histidine 65 each contribute to the [2Fe-2S] cluster site.

The protein belongs to the bacterial ring-hydroxylating dioxygenase ferredoxin component family. As to quaternary structure, this dioxygenase system consists of four proteins: the two subunits of the hydroxylase component (HcaE and HcaF), a ferredoxin (HcaC) and a ferredoxin reductase (HcaD). The cofactor is [2Fe-2S] cluster.

It functions in the pathway aromatic compound metabolism; 3-phenylpropanoate degradation. Functionally, part of the multicomponent 3-phenylpropionate dioxygenase, that converts 3-phenylpropionic acid (PP) and cinnamic acid (CI) into 3-phenylpropionate-dihydrodiol (PP-dihydrodiol) and cinnamic acid-dihydrodiol (CI-dihydrodiol), respectively. This protein seems to be a 2Fe-2S ferredoxin. This Photorhabdus laumondii subsp. laumondii (strain DSM 15139 / CIP 105565 / TT01) (Photorhabdus luminescens subsp. laumondii) protein is 3-phenylpropionate/cinnamic acid dioxygenase ferredoxin subunit.